A 487-amino-acid chain; its full sequence is Glutamyl-tRNA(Gln) amidotransferase subunit A (487 aa).

Residues Lys-79 and Ser-154 each act as charge relay system in the active site. The active-site Acyl-ester intermediate is the Ser-178.

This sequence belongs to the amidase family. GatA subfamily. In terms of assembly, heterotrimer of A, B and C subunits.

The catalysed reaction is L-glutamyl-tRNA(Gln) + L-glutamine + ATP + H2O = L-glutaminyl-tRNA(Gln) + L-glutamate + ADP + phosphate + H(+). Allows the formation of correctly charged Gln-tRNA(Gln) through the transamidation of misacylated Glu-tRNA(Gln) in organisms which lack glutaminyl-tRNA synthetase. The reaction takes place in the presence of glutamine and ATP through an activated gamma-phospho-Glu-tRNA(Gln). This is Glutamyl-tRNA(Gln) amidotransferase subunit A from Moorella thermoacetica (strain ATCC 39073 / JCM 9320).